A 260-amino-acid chain; its full sequence is Adenosine 5'-phosphosulfate reductase (260 aa).

Positions 130, 131, 213, and 216 each coordinate [4Fe-4S] cluster. The active-site Nucleophile; cysteine thiosulfonate intermediate is the Cys241.

The protein belongs to the PAPS reductase family. CysH subfamily. The cofactor is [4Fe-4S] cluster.

It localises to the cytoplasm. The enzyme catalyses [thioredoxin]-disulfide + sulfite + AMP + 2 H(+) = adenosine 5'-phosphosulfate + [thioredoxin]-dithiol. It functions in the pathway sulfur metabolism; hydrogen sulfide biosynthesis; sulfite from sulfate. In terms of biological role, catalyzes the formation of sulfite from adenosine 5'-phosphosulfate (APS) using thioredoxin as an electron donor. The chain is Adenosine 5'-phosphosulfate reductase from Agrobacterium fabrum (strain C58 / ATCC 33970) (Agrobacterium tumefaciens (strain C58)).